We begin with the raw amino-acid sequence, 511 residues long: ATP synthase subunit alpha (511 aa).

An ATP-binding site is contributed by 170-177; that stretch reads GDRQTGKT.

This sequence belongs to the ATPase alpha/beta chains family. In terms of assembly, F-type ATPases have 2 components, CF(1) - the catalytic core - and CF(0) - the membrane proton channel. CF(1) has five subunits: alpha(3), beta(3), gamma(1), delta(1), epsilon(1). CF(0) has three main subunits: a(1), b(2) and c(9-12). The alpha and beta chains form an alternating ring which encloses part of the gamma chain. CF(1) is attached to CF(0) by a central stalk formed by the gamma and epsilon chains, while a peripheral stalk is formed by the delta and b chains.

It is found in the cell inner membrane. It carries out the reaction ATP + H2O + 4 H(+)(in) = ADP + phosphate + 5 H(+)(out). In terms of biological role, produces ATP from ADP in the presence of a proton gradient across the membrane. The alpha chain is a regulatory subunit. The protein is ATP synthase subunit alpha of Granulibacter bethesdensis (strain ATCC BAA-1260 / CGDNIH1).